Here is a 176-residue protein sequence, read N- to C-terminus: Protein GrpE (176 aa).

It belongs to the GrpE family. Homodimer.

Its subcellular location is the cytoplasm. In terms of biological role, participates actively in the response to hyperosmotic and heat shock by preventing the aggregation of stress-denatured proteins, in association with DnaK and GrpE. It is the nucleotide exchange factor for DnaK and may function as a thermosensor. Unfolded proteins bind initially to DnaJ; upon interaction with the DnaJ-bound protein, DnaK hydrolyzes its bound ATP, resulting in the formation of a stable complex. GrpE releases ADP from DnaK; ATP binding to DnaK triggers the release of the substrate protein, thus completing the reaction cycle. Several rounds of ATP-dependent interactions between DnaJ, DnaK and GrpE are required for fully efficient folding. The protein is Protein GrpE of Thermoplasma volcanium (strain ATCC 51530 / DSM 4299 / JCM 9571 / NBRC 15438 / GSS1).